The sequence spans 516 residues: HMG box-containing protein 1 (516 aa).

Positions 150–182 are disordered; that stretch reads ARPPPVSSSSKSGPAFPHDHWKEETPVRHERAN. Residues 156-165 are compositionally biased toward low complexity; it reads SSSSKSGPAF. A compositionally biased stretch (basic and acidic residues) spans 166–182; the sequence is PHDHWKEETPVRHERAN. Residues 203 to 345 enclose the AXH domain; it reads WCNSWPSTIW…PPGHPDAINF (143 aa). Residues 436–504 constitute a DNA-binding region (HMG box); that stretch reads CKRPMNAFML…EQKRLNPDCW (69 aa).

In terms of assembly, binds TCF4. Binds RB1. Binds the second PAH repeat of SIN3A. Post-translationally, ubiquitinated by the CTLH E3 ubiquitin-protein ligase complex, leading to subsequent proteasomal degradation.

The protein localises to the nucleus. Functionally, transcriptional repressor that binds to the promoter region of target genes. Plays a role in the regulation of the cell cycle and of the Wnt pathway. Binds preferentially to the sequence 5'-TTCATTCATTCA-3'. Binding to the histone H1.0 promoter is enhanced by interaction with RB1. Disrupts the interaction between DNA and TCF4. The sequence is that of HMG box-containing protein 1 (Hbp1) from Mus musculus (Mouse).